Here is a 268-residue protein sequence, read N- to C-terminus: Interleukin-1 alpha (268 aa).

Residues 1 to 112 (MAKVPDLFED…NTEEEIIKPR (112 aa)) constitute a propeptide that is removed on maturation. Position 82 is an N6-acetyllysine (Lys-82). The tract at residues 82–86 (KKRRL) is nuclear localization signal (NLS). Ser-87 bears the Phosphoserine mark. Asn-102 and Asn-141 each carry an N-linked (GlcNAc...) asparagine glycan.

This sequence belongs to the IL-1 family. In terms of assembly, monomer. Interacts with TMED10; the interaction mediates the translocation from the cytoplasm into the ERGIC (endoplasmic reticulum-Golgi intermediate compartment) and thereby secretion. Interacts with IL1R1. Interacts with S100A13; this interaction is the first step in the export of IL1A, followed by direct translocation of this complex across the plasma membrane. In terms of processing, acetylated within its nuclear localization sequence, which impacts subcellular localization. Post-translationally, proteolytic processed by CAPN1 in a calcium-dependent manner. Cleavage from 31 kDa precursor to 18 kDa biologically active molecules. Phosphorylated. Phosphorylation greatly enhances susceptibility to digestion and promotes the conversion of pre-IL1A alpha to the biologically active IL1A.

Its subcellular location is the nucleus. The protein localises to the cytoplasm. The protein resides in the secreted. Its function is as follows. Cytokine constitutively present intracellularly in nearly all resting non-hematopoietic cells that plays an important role in inflammation and bridges the innate and adaptive immune systems. After binding to its receptor IL1R1 together with its accessory protein IL1RAP, forms the high affinity interleukin-1 receptor complex. Signaling involves the recruitment of adapter molecules such as MYD88, IRAK1 or IRAK4. In turn, mediates the activation of NF-kappa-B and the three MAPK pathways p38, p42/p44 and JNK pathways. Within the cell, acts as an alarmin and cell death results in its liberation in the extracellular space after disruption of the cell membrane to induce inflammation and alert the host to injury or damage. In addition to its role as a danger signal, which occurs when the cytokine is passively released by cell necrosis, directly senses DNA damage and acts as signal for genotoxic stress without loss of cell integrity. The chain is Interleukin-1 alpha (IL1A) from Bubalus carabanensis (Swamp type water buffalo).